The sequence spans 432 residues: Enolase (432 aa).

Position 167 (Q167) interacts with (2R)-2-phosphoglycerate. The active-site Proton donor is the E209. Residues D246, E287, and D314 each coordinate Mg(2+). The (2R)-2-phosphoglycerate site is built by K339, R368, S369, and K390. K339 serves as the catalytic Proton acceptor.

Belongs to the enolase family. The cofactor is Mg(2+).

Its subcellular location is the cytoplasm. It is found in the secreted. The protein localises to the cell surface. It catalyses the reaction (2R)-2-phosphoglycerate = phosphoenolpyruvate + H2O. Its pathway is carbohydrate degradation; glycolysis; pyruvate from D-glyceraldehyde 3-phosphate: step 4/5. Catalyzes the reversible conversion of 2-phosphoglycerate (2-PG) into phosphoenolpyruvate (PEP). It is essential for the degradation of carbohydrates via glycolysis. The chain is Enolase from Prochlorococcus marinus (strain MIT 9211).